Consider the following 825-residue polypeptide: Ubiquitin carboxyl-terminal hydrolase 16 (825 aa).

Residues 1 to 20 (MGKKRTKGRSAPDTVASESA) form a disordered region. The UBP-type zinc finger occupies 22-141 (PVCRHLRKGL…QVVDYVRKQA (120 aa)). Residues cysteine 24, histidine 26, cysteine 48, cysteine 51, cysteine 73, cysteine 76, cysteine 81, histidine 89, histidine 93, histidine 102, cysteine 115, and cysteine 118 each contribute to the Zn(2+) site. Lysine 139 participates in a covalent cross-link: Glycyl lysine isopeptide (Lys-Gly) (interchain with G-Cter in SUMO2). The span at 164–180 (EKESKNEQEREKSENLA) shows a compositional bias: basic and acidic residues. The tract at residues 164-184 (EKESKNEQEREKSENLAKETI) is disordered. Serine 188 is modified (phosphoserine). The region spanning 195–824 (KGLSNLGNTC…QAYLLFYERI (630 aa)) is the USP domain. The active-site Nucleophile is the cysteine 204. The span at 393-407 (SGKKSINDKNVKMTM) shows a compositional bias: basic and acidic residues. The tract at residues 393-456 (SGKKSINDKN…KQAKNQRRQQ (64 aa)) is disordered. The span at 408-419 (EEEDKDSEEEKD) shows a compositional bias: acidic residues. Serine 414 bears the Phosphoserine mark. The segment covering 436 to 456 (HLQKKAKKQAKKQAKNQRRQQ) has biased composition (basic residues). Serine 520 and serine 531 each carry phosphoserine. Histidine 759 serves as the catalytic Proton acceptor.

It belongs to the peptidase C19 family. USP16 subfamily. As to quaternary structure, homotetramer. Associates with late pre-40S ribosomes. Interacts with CEP78; promoting deubiquitination of tektins. Phosphorylated at the onset of mitosis and dephosphorylated during the metaphase/anaphase transition. Phosphorylation by AURKB enhances the deubiquitinase activity.

It localises to the nucleus. It is found in the cytoplasm. It catalyses the reaction Thiol-dependent hydrolysis of ester, thioester, amide, peptide and isopeptide bonds formed by the C-terminal Gly of ubiquitin (a 76-residue protein attached to proteins as an intracellular targeting signal).. Specifically deubiquitinates 'Lys-120' of histone H2A (H2AK119Ub), a specific tag for epigenetic transcriptional repression, thereby acting as a coactivator. Deubiquitination of histone H2A is a prerequisite for subsequent phosphorylation at 'Ser-11' of histone H3 (H3S10ph), and is required for chromosome segregation when cells enter into mitosis. In resting B- and T-lymphocytes, phosphorylation by AURKB leads to enhance its activity, thereby maintaining transcription in resting lymphocytes. Regulates Hox gene expression via histone H2A deubiquitination. Prefers nucleosomal substrates. Does not deubiquitinate histone H2B. Also deubiquitinates non-histone proteins, such as ribosomal protein RPS27A: deubiquitination of monoubiquitinated RPS27A promotes maturation of the 40S ribosomal subunit. Also mediates deubiquitination of tektin proteins (TEKT1, TEKT2, TEK3, TEKT4 and TEKT5), promoting their stability. This is Ubiquitin carboxyl-terminal hydrolase 16 (Usp16) from Mus musculus (Mouse).